We begin with the raw amino-acid sequence, 569 residues long: Proline--tRNA ligase (569 aa).

It belongs to the class-II aminoacyl-tRNA synthetase family. ProS type 1 subfamily. As to quaternary structure, homodimer.

The protein localises to the cytoplasm. It catalyses the reaction tRNA(Pro) + L-proline + ATP = L-prolyl-tRNA(Pro) + AMP + diphosphate. Its function is as follows. Catalyzes the attachment of proline to tRNA(Pro) in a two-step reaction: proline is first activated by ATP to form Pro-AMP and then transferred to the acceptor end of tRNA(Pro). As ProRS can inadvertently accommodate and process non-cognate amino acids such as alanine and cysteine, to avoid such errors it has two additional distinct editing activities against alanine. One activity is designated as 'pretransfer' editing and involves the tRNA(Pro)-independent hydrolysis of activated Ala-AMP. The other activity is designated 'posttransfer' editing and involves deacylation of mischarged Ala-tRNA(Pro). The misacylated Cys-tRNA(Pro) is not edited by ProRS. The sequence is that of Proline--tRNA ligase from Colwellia psychrerythraea (strain 34H / ATCC BAA-681) (Vibrio psychroerythus).